The chain runs to 436 residues: Gamma-glutamyl phosphate reductase (436 aa).

It belongs to the gamma-glutamyl phosphate reductase family.

It localises to the cytoplasm. It carries out the reaction L-glutamate 5-semialdehyde + phosphate + NADP(+) = L-glutamyl 5-phosphate + NADPH + H(+). Its pathway is amino-acid biosynthesis; L-proline biosynthesis; L-glutamate 5-semialdehyde from L-glutamate: step 2/2. Functionally, catalyzes the NADPH-dependent reduction of L-glutamate 5-phosphate into L-glutamate 5-semialdehyde and phosphate. The product spontaneously undergoes cyclization to form 1-pyrroline-5-carboxylate. This chain is Gamma-glutamyl phosphate reductase, found in Prochlorococcus marinus subsp. pastoris (strain CCMP1986 / NIES-2087 / MED4).